A 943-amino-acid chain; its full sequence is Receptor-like kinase TMK3 (943 aa).

The signal sequence occupies residues 1–24; the sequence is MSNSHLGTLCFIISLLGLANFSLS. Residues 25–482 lie on the Extracellular side of the membrane; the sequence is QTGLDDSTMQ…ETSKKSSNVK (458 aa). N-linked (GlcNAc...) asparagine glycosylation occurs at Asn41. A disulfide bridge links Cys54 with Cys61. 10 LRR repeats span residues 64–88, 89–111, 112–134, 136–160, 162–183, 186–210, 212–232, 233–254, 255–279, and 281–301; these read SNRV…LQSL, SELV…LSGL, SRLQ…LFSG, SSLQ…VKEA, SLQN…FFGS, LPSL…FAGT, IQSL…LGNM, TSLV…DLSG, LVSL…LVSL, and SLTT…LFGK. N-linked (GlcNAc...) asparagine glycosylation is found at Asn165 and Asn170. 2 N-linked (GlcNAc...) asparagine glycosylation sites follow: Asn223 and Asn231. Asn286 carries N-linked (GlcNAc...) asparagine glycosylation. Cystine bridges form between Cys315/Cys323 and Cys353/Cys361. 3 LRR repeats span residues 363 to 386, 387 to 410, and 411 to 438; these read GGNI…SLAK, LTSL…ELTT, and LSKL…VTLV. An N-linked (GlcNAc...) asparagine glycan is attached at Asn365. Residues 441-476 form a disordered region; sequence GNANMGKNGPNKTSDAPGASPGSKPSGGSDGSETSK. Asn451 is a glycosylation site (N-linked (GlcNAc...) asparagine). Positions 454 to 467 are enriched in low complexity; sequence SDAPGASPGSKPSG. A helical transmembrane segment spans residues 483-503; sequence IIVPVVGGVVGALCLVGLGVC. Over 504–943 the chain is Cytoplasmic; that stretch reads LYAKKRKRPA…ADSFTSVDGR (440 aa). A disordered region spans residues 514–534; it reads RVQSPSSNMVIHPHHSGDNDD. Residues 585–866 enclose the Protein kinase domain; that stretch reads FSEENILGRG…AHIVNVLSSL (282 aa). Residues 591–599 and Lys613 each bind ATP; that span reads LGRGGFGTV. The active-site Proton acceptor is the Asp714. Positions 904–943 are disordered; the sequence is QTADDSGSSSSAYGSKDNTQTSIPTRPSGFADSFTSVDGR. The span at 906 to 918 shows a compositional bias: low complexity; it reads ADDSGSSSSAYGS. Polar residues predominate over residues 919–928; it reads KDNTQTSIPT.

Belongs to the protein kinase superfamily. Ser/Thr protein kinase family. Expressed in roots, leaves, stems, siliques and flowers.

The protein resides in the membrane. The enzyme catalyses L-seryl-[protein] + ATP = O-phospho-L-seryl-[protein] + ADP + H(+). It carries out the reaction L-threonyl-[protein] + ATP = O-phospho-L-threonyl-[protein] + ADP + H(+). Involved in auxin signal transduction and cell expansion and proliferation regulation. This chain is Receptor-like kinase TMK3, found in Arabidopsis thaliana (Mouse-ear cress).